The primary structure comprises 203 residues: Thymidylate kinase (203 aa).

14 to 21 (GGEGIGKS) lines the ATP pocket.

This sequence belongs to the thymidylate kinase family.

It carries out the reaction dTMP + ATP = dTDP + ADP. In terms of biological role, phosphorylation of dTMP to form dTDP in both de novo and salvage pathways of dTTP synthesis. The chain is Thymidylate kinase from Rickettsia peacockii (strain Rustic).